An 87-amino-acid polypeptide reads, in one-letter code: TIKEKQASILALFEHLTSVPKQHIPEKERDNRLHDVGHLSRGKLFSLFHREHLEEATHLYEILHAAKNFDDFLLLCKQARDFVNEGM.

The protein belongs to the tyrosinase family. Hemocyanin subfamily. As to quaternary structure, polymer that contains six different types of chains (alpha, beta, gamma, delta, epsilon, and zeta). Hemolymph.

The protein resides in the secreted. Its subcellular location is the extracellular space. Its function is as follows. Hemocyanins are copper-containing oxygen carriers occurring freely dissolved in the hemolymph of many mollusks and arthropods. In Tachypleus tridentatus (Japanese horseshoe crab), this protein is Hemocyanin alpha chain.